The primary structure comprises 873 residues: Actin-related protein 8 (873 aa).

Residues 108–129 (DEQVKPTSSTSSTSTTEEVEIK) are disordered. A compositionally biased stretch (low complexity) spans 114–123 (TSSTSSTSTT). ATP is bound at residue 368–371 (DLGH). Positions 596–650 (NNNNNNNNSSSSSNNNNNNNNSGSNSNINSYNNNNNNNNNNNNNNNNNNNNSFNN) are enriched in low complexity. The tract at residues 596-701 (NNNNNNNNSS…TSSPTKKLKI (106 aa)) is disordered. A compositionally biased stretch (polar residues) spans 651–668 (VTIVTSTLNSNSTVPSTL). Residues 669–696 (NSNSTVPSISNSNSTVPSTSTSTTSSPT) show a composition bias toward low complexity. Residues 762-804 (FKQLEQQYQAQQLQFQQQLQQQQQQQQQLQQQLQNSTNSATTT) are a coiled coil.

The protein belongs to the actin family. ARP8 subfamily. In terms of assembly, component of the chromatin remodeling INO80 complex. Exists as monomers and dimers, but the dimer is most probably the biologically relevant form required for stable interactions with histones that exploits the twofold symmetry of the nucleosome core.

Its subcellular location is the nucleus. It is found in the cytoplasm. The protein localises to the cytoskeleton. Plays an important role in the functional organization of mitotic chromosomes. Exhibits low basal ATPase activity, and unable to polymerize. In terms of biological role, proposed core component of the chromatin remodeling INO80 complex which is involved in transcriptional regulation, DNA replication and probably DNA repair. Strongly prefer nucleosomes and H3-H4 tetramers over H2A-H2B dimers, suggesting it may act as a nucleosome recognition module within the complex. In Dictyostelium discoideum (Social amoeba), this protein is Actin-related protein 8.